The following is a 68-amino-acid chain: conotoxin S11.3 (68 aa).

A signal peptide spans 1–26 (MMFRLTSVSCFLLVIVCLNLFQVVLT). 4 disulfide bridges follow: Cys-29-Cys-43, Cys-36-Cys-48, Cys-42-Cys-52, and Cys-47-Cys-56. Tyr-60 is modified (tyrosine amide). A propeptide spanning residues 64–68 (ATFQE) is cleaved from the precursor.

The protein belongs to the conotoxin I2 superfamily. In terms of tissue distribution, expressed by the venom duct.

It is found in the secreted. In Conus striatus (Striated cone), this protein is conotoxin S11.3.